A 581-amino-acid polypeptide reads, in one-letter code: Zinc finger protein 319 (581 aa).

The segment covering 1 to 22 (MSESWQQPPQTQPQQPQAPQPQ) has biased composition (low complexity). Residues 1–39 (MSESWQQPPQTQPQQPQAPQPQHHAETPPALAEHTLPPG) form a disordered region. The segment at 75–99 (PKCGVCGHDLAHLSSPHEHQCLAGH) adopts a C2H2-type 1 zinc-finger fold. The C2H2-type 2; degenerate zinc-finger motif lies at 103-125 (FQCTQCLKIFHQATDLLEHQCVQ). Lysine 129 is covalently cross-linked (Glycyl lysine isopeptide (Lys-Gly) (interchain with G-Cter in SUMO2)). 4 consecutive C2H2-type zinc fingers follow at residues 131–153 (FVCG…HSSH), 201–223 (YSCP…ERIH), 229–251 (YKCT…KRTH), and 257–279 (YKCA…MYAH). The residue at position 280 (serine 280) is a Phosphoserine. Residues 286–308 (FRCNVCELHFKESSELLQHPCTP) form a C2H2-type 7; degenerate zinc finger. 3 consecutive C2H2-type zinc fingers follow at residues 314–336 (FRCG…ERTH), 342–364 (FKCD…RRTH), and 370–392 (FKCG…QHVH). Residues 398–420 (FKCPVCQKGFDQSAELLRHKCLP) form a C2H2-type 11; degenerate zinc finger. The C2H2-type 12 zinc-finger motif lies at 427-449 (FKCPVCNKAYKRASALQKHQLSH). A C2H2-type 13; degenerate zinc finger spans residues 457–479 (LRCTLCERRFFSSSEFVQHRCDP). 3 consecutive C2H2-type zinc fingers follow at residues 485–507 (LKCP…RRVH), 513–535 (YKCP…QGVH), and 541–563 (FKCV…SAQH).

This sequence belongs to the krueppel C2H2-type zinc-finger protein family.

Its subcellular location is the nucleus. May be involved in transcriptional regulation. The protein is Zinc finger protein 319 (Znf319) of Mus musculus (Mouse).